Reading from the N-terminus, the 262-residue chain is Acyl-[acyl-carrier-protein]--UDP-N-acetylglucosamine O-acyltransferase (262 aa).

This sequence belongs to the transferase hexapeptide repeat family. LpxA subfamily. As to quaternary structure, homotrimer.

It is found in the cytoplasm. The enzyme catalyses a (3R)-hydroxyacyl-[ACP] + UDP-N-acetyl-alpha-D-glucosamine = a UDP-3-O-[(3R)-3-hydroxyacyl]-N-acetyl-alpha-D-glucosamine + holo-[ACP]. Its pathway is glycolipid biosynthesis; lipid IV(A) biosynthesis; lipid IV(A) from (3R)-3-hydroxytetradecanoyl-[acyl-carrier-protein] and UDP-N-acetyl-alpha-D-glucosamine: step 1/6. In terms of biological role, involved in the biosynthesis of lipid A, a phosphorylated glycolipid that anchors the lipopolysaccharide to the outer membrane of the cell. In Vibrio campbellii (strain ATCC BAA-1116), this protein is Acyl-[acyl-carrier-protein]--UDP-N-acetylglucosamine O-acyltransferase.